Reading from the N-terminus, the 207-residue chain is MNEMLTLVGQLRSDFGTSSARALRRQGKVPGVIYKKGITPIHVCTLEKEVAKLYRKPFFSSTVIQLQVDDQRFKVLPKAVQLHPVTEFMNHIDFILVEQNGSMQKVKVPISFEGKEKSLGIKRGGYLNIVKRYVDLLCPVDKIPQCIKCDIANVSVGASIKISRLELPEGCNLVKSTTDYVIASVIGKSSKQDKEEEGTAEDGADSK.

It belongs to the bacterial ribosomal protein bL25 family. CTC subfamily. Part of the 50S ribosomal subunit; part of the 5S rRNA/L5/L18/L25 subcomplex. Contacts the 5S rRNA. Binds to the 5S rRNA independently of L5 and L18.

Its function is as follows. This is one of the proteins that binds to the 5S RNA in the ribosome where it forms part of the central protuberance. The chain is Large ribosomal subunit protein bL25 from Orientia tsutsugamushi (strain Boryong) (Rickettsia tsutsugamushi).